Consider the following 213-residue polypeptide: Deoxyribose-phosphate aldolase (213 aa).

The Proton donor/acceptor role is filled by Asp-89. Lys-151 serves as the catalytic Schiff-base intermediate with acetaldehyde. Lys-180 serves as the catalytic Proton donor/acceptor.

This sequence belongs to the DeoC/FbaB aldolase family. DeoC type 1 subfamily.

The protein resides in the cytoplasm. The enzyme catalyses 2-deoxy-D-ribose 5-phosphate = D-glyceraldehyde 3-phosphate + acetaldehyde. The protein operates within carbohydrate degradation; 2-deoxy-D-ribose 1-phosphate degradation; D-glyceraldehyde 3-phosphate and acetaldehyde from 2-deoxy-alpha-D-ribose 1-phosphate: step 2/2. Catalyzes a reversible aldol reaction between acetaldehyde and D-glyceraldehyde 3-phosphate to generate 2-deoxy-D-ribose 5-phosphate. In Finegoldia magna (strain ATCC 29328 / DSM 20472 / WAL 2508) (Peptostreptococcus magnus), this protein is Deoxyribose-phosphate aldolase.